We begin with the raw amino-acid sequence, 66 residues long: Large ribosomal subunit protein bL35 (66 aa).

Belongs to the bacterial ribosomal protein bL35 family.

This chain is Large ribosomal subunit protein bL35, found in Moorella thermoacetica (strain ATCC 39073 / JCM 9320).